A 465-amino-acid polypeptide reads, in one-letter code: Chromosomal replication initiator protein DnaA (465 aa).

The domain I, interacts with DnaA modulators stretch occupies residues 1–80 (MLWTDCLTRL…VEILVDSRPG (80 aa)). Residues 80 to 127 (GAILSPAEQPATTTAALSSTPVVPQRVKKEVVEPAATQSNKILNSKKR) form a domain II region. A domain III, AAA+ region region spans residues 128–345 (LLNPLFTFSL…GALNKVVAIA (218 aa)). Residues G173, G175, K176, and T177 each coordinate ATP. The tract at residues 346–465 (RFKGSQIDLD…YKNLLRLLQS (120 aa)) is domain IV, binds dsDNA.

It belongs to the DnaA family. In terms of assembly, oligomerizes as a right-handed, spiral filament on DNA at oriC.

The protein localises to the cytoplasm. Its function is as follows. Plays an essential role in the initiation and regulation of chromosomal replication. ATP-DnaA binds to the origin of replication (oriC) to initiate formation of the DNA replication initiation complex once per cell cycle. Binds the DnaA box (a 9 base pair repeat at the origin) and separates the double-stranded (ds)DNA. Forms a right-handed helical filament on oriC DNA; dsDNA binds to the exterior of the filament while single-stranded (ss)DNA is stabiized in the filament's interior. The ATP-DnaA-oriC complex binds and stabilizes one strand of the AT-rich DNA unwinding element (DUE), permitting loading of DNA polymerase. After initiation quickly degrades to an ADP-DnaA complex that is not apt for DNA replication. Binds acidic phospholipids. The polypeptide is Chromosomal replication initiator protein DnaA (Acinetobacter baylyi (strain ATCC 33305 / BD413 / ADP1)).